A 556-amino-acid polypeptide reads, in one-letter code: Arginine--tRNA ligase (556 aa).

The 'HIGH' region motif lies at 132–142 (ANPTGSLHLGH).

It belongs to the class-I aminoacyl-tRNA synthetase family. In terms of assembly, monomer.

It is found in the cytoplasm. It catalyses the reaction tRNA(Arg) + L-arginine + ATP = L-arginyl-tRNA(Arg) + AMP + diphosphate. This chain is Arginine--tRNA ligase, found in Anoxybacillus flavithermus (strain DSM 21510 / WK1).